A 161-amino-acid chain; its full sequence is MLKDKKVIILGDRDGIPGQAIEACIKSAGAHVLFSTTECFVUTSAGAMDLENQKRIKGFAEEFGAENILIVLGGAEAEASGLACETVTNGDPTFAGPLAGVQLGLSCYHVVEPEIKNNVDADVYDEQIGMMEMVLDVDAIIAEIKGYREQFGKYVLAEAEV.

Sec-42 is a catalytic residue. Sec-42 is a non-standard amino acid (selenocysteine).

It belongs to the GrdA family. Monomer. Component of the glycine, sarcosine and betaine reductase complexes, together with components B and C.

The catalysed reaction is acetyl phosphate + [thioredoxin]-disulfide + NH4(+) + H2O = [thioredoxin]-dithiol + glycine + phosphate + H(+). The enzyme catalyses acetyl phosphate + methylamine + [thioredoxin]-disulfide + H2O = sarcosine + [thioredoxin]-dithiol + phosphate + H(+). It catalyses the reaction acetyl phosphate + trimethylamine + [thioredoxin]-disulfide + H2O = glycine betaine + [thioredoxin]-dithiol + phosphate + H(+). Functionally, in the first step of glycine, betaine and sarcosine reductases, the substrate is bound to component PB via a Schiff base intermediate. Then the PB-activated substrate is nucleophilically attacked by the selenol anion of component PA to transform it to a carboxymethylated selenoether and the respective amine. By action of component PC, acetyl phosphate is formed, leaving component PA in its oxidized state. Finally component PA becomes reduced by the thioredoxin system to start a new catalytic cycle of reductive deamination. In Photobacterium profundum (strain SS9), this protein is Glycine/sarcosine/betaine reductase complex component A2 (grdA2).